The sequence spans 117 residues: Ig heavy chain V region 5-76 (117 aa).

The signal sequence occupies residues 1–19 (MNFVLSLIFLALILKGVQC). The segment at 20–49 (EVHLVESGGGLVKPGGSLKLSCVVSGFTFN) is framework-1. Cys41 and Cys115 are joined by a disulfide. The interval 50 to 54 (KYAMS) is complementarity-determining-1. Residues 55 to 68 (WVRQTPEKRLEWVA) are framework-2. The interval 69 to 85 (TISSGGLYTYYPDSVKG) is complementarity-determining-2. Residues 86–117 (RFTISRDNAGNTLYLQMSSLRSEDTAMYYCAR) form a framework-3 region.

The chain is Ig heavy chain V region 5-76 from Mus musculus (Mouse).